We begin with the raw amino-acid sequence, 298 residues long: Probable 2-(5''-triphosphoribosyl)-3'-dephosphocoenzyme-A synthase 2 (298 aa).

This sequence belongs to the CitG/MdcB family.

It catalyses the reaction 3'-dephospho-CoA + ATP = 2'-(5''-triphospho-alpha-D-ribosyl)-3'-dephospho-CoA + adenine. The chain is Probable 2-(5''-triphosphoribosyl)-3'-dephosphocoenzyme-A synthase 2 from Salmonella paratyphi A (strain ATCC 9150 / SARB42).